The primary structure comprises 107 residues: MKATAALVAATLLLAVTLFHRAERNPISRSCEGANCVVDLTRCEYGDVTDFFGRKVCAKGPGDKCGGPYELHGKCGVGMDCRCGLCSGCSLHNLQCFFFEGGLPSSC.

The signal sequence occupies residues 1–22; the sequence is MKATAALVAATLLLAVTLFHRA. Residues 23-24 constitute a propeptide that is removed on maturation; the sequence is ER.

As to quaternary structure, homodimer; disulfide-linked.

In terms of biological role, neurosparins are multifunctional neurohormones: they inhibit the effects of juvenile hormone, stimulate fluid reabsorption of isolated recta and induces an increase in hemolymph lipid and trehalose levels. This Locusta migratoria (Migratory locust) protein is Neuroparsin-A.